A 442-amino-acid chain; its full sequence is ATP-dependent protease ATPase subunit HslU (442 aa).

Residues Ile18 and 60-65 (GVGKTE) contribute to the ATP site. Residues 133 to 156 (DALLPKPKNDWDNTDSDTSSNTRQ) form a disordered region. Residues Asp255, Glu320, and Arg392 each coordinate ATP.

Belongs to the ClpX chaperone family. HslU subfamily. A double ring-shaped homohexamer of HslV is capped on each side by a ring-shaped HslU homohexamer. The assembly of the HslU/HslV complex is dependent on binding of ATP.

Its subcellular location is the cytoplasm. Its function is as follows. ATPase subunit of a proteasome-like degradation complex; this subunit has chaperone activity. The binding of ATP and its subsequent hydrolysis by HslU are essential for unfolding of protein substrates subsequently hydrolyzed by HslV. HslU recognizes the N-terminal part of its protein substrates and unfolds these before they are guided to HslV for hydrolysis. This chain is ATP-dependent protease ATPase subunit HslU, found in Shewanella sp. (strain ANA-3).